The chain runs to 149 residues: D-aminoacyl-tRNA deacylase (149 aa).

The Gly-cisPro motif, important for rejection of L-amino acids motif lies at Gly-137–Pro-138.

Belongs to the DTD family. As to quaternary structure, homodimer.

The protein resides in the cytoplasm. It carries out the reaction glycyl-tRNA(Ala) + H2O = tRNA(Ala) + glycine + H(+). The catalysed reaction is a D-aminoacyl-tRNA + H2O = a tRNA + a D-alpha-amino acid + H(+). An aminoacyl-tRNA editing enzyme that deacylates mischarged D-aminoacyl-tRNAs. Also deacylates mischarged glycyl-tRNA(Ala), protecting cells against glycine mischarging by AlaRS. Acts via tRNA-based rather than protein-based catalysis; rejects L-amino acids rather than detecting D-amino acids in the active site. By recycling D-aminoacyl-tRNA to D-amino acids and free tRNA molecules, this enzyme counteracts the toxicity associated with the formation of D-aminoacyl-tRNA entities in vivo and helps enforce protein L-homochirality. The chain is D-aminoacyl-tRNA deacylase from Desulforudis audaxviator (strain MP104C).